We begin with the raw amino-acid sequence, 144 residues long: UPF0102 protein Veis_0630 (144 aa).

Residues 11–31 (PPAAAPGPAPAPASAATASER) are disordered.

Belongs to the UPF0102 family.

In Verminephrobacter eiseniae (strain EF01-2), this protein is UPF0102 protein Veis_0630.